The primary structure comprises 48 residues: Small, acid-soluble spore protein P (48 aa).

The segment covering methionine 1–lysine 12 has biased composition (basic and acidic residues). The disordered stretch occupies residues methionine 1–methionine 48. Basic residues predominate over residues lysine 31–methionine 48.

It belongs to the SspP family.

Its subcellular location is the spore core. In Geobacillus kaustophilus (strain HTA426), this protein is Small, acid-soluble spore protein P.